The following is a 587-amino-acid chain: MKRDHHQFQGRLSNHGTSSSSSSISKDKMMMVKKEEDGGGNMDDELLAVLGYKVRSSEMAEVALKLEQLETMMSNVQEDGLSHLATDTVHYNPSELYSWLDNMLSELNPPPLPASSNGLDPVLPSPEICGFPASDYDLKVIPGNAIYQFPAIDSSSSSNNQNKRLKSCSSPDSMVTSTSTGTQIGGVIGTTVTTTTTTTTAAGESTRSVILVDSQENGVRLVHALMACAEAIQQNNLTLAEALVKQIGCLAVSQAGAMRKVATYFAEALARRIYRLSPPQNQIDHCLSDTLQMHFYETCPYLKFAHFTANQAILEAFEGKKRVHVIDFSMNQGLQWPALMQALALREGGPPTFRLTGIGPPAPDNSDHLHEVGCKLAQLAEAIHVEFEYRGFVANSLADLDASMLELRPSDTEAVAVNSVFELHKLLGRPGGIEKVLGVVKQIKPVIFTVVEQESNHNGPVFLDRFTESLHYYSTLFDSLEGVPNSQDKVMSEVYLGKQICNLVACEGPDRVERHETLSQWGNRFGSSGLAPAHLGSNAFKQASMLLSVFNSGQGYRVEESNGCLMLGWHTRPLITTSAWKLSTAAY.

The interval 1-26 is disordered; the sequence is MKRDHHQFQGRLSNHGTSSSSSSISK. The DELLA motif motif lies at 44–48; that stretch reads DELLA. Residues 66–70 carry the LEXLE motif motif; the sequence is LEQLE. A VHYNP motif motif is present at residues 89 to 93; the sequence is VHYNP. Residues 152–181 form a disordered region; it reads IDSSSSSNNQNKRLKSCSSPDSMVTSTSTG. Over residues 153–175 the composition is skewed to polar residues; sequence DSSSSSNNQNKRLKSCSSPDSMV. The GRAS domain occupies 212 to 581; sequence VDSQENGVRL…RPLITTSAWK (370 aa). The tract at residues 219-273 is leucine repeat I (LRI); sequence VRLVHALMACAEAIQQNNLTLAEALVKQIGCLAVSQAGAMRKVATYFAEALARRI. The interval 292 to 357 is VHIID; the sequence is QMHFYETCPY…GGPPTFRLTG (66 aa). A VHIID motif is present at residues 323 to 327; sequence VHVID. Residues 371-403 form a leucine repeat II (LRII) region; the sequence is EVGCKLAQLAEAIHVEFEYRGFVANSLADLDAS. The segment at 415 to 502 is PFYRE; it reads VAVNSVFELH…EVYLGKQICN (88 aa). Residues 423 to 427 carry the LXXLL motif motif; the sequence is LHKLL. Residues 505 to 581 are SAW; the sequence is ACEGPDRVER…RPLITTSAWK (77 aa).

This sequence belongs to the GRAS family. DELLA subfamily. In terms of assembly, interacts directly with the GID2/SLY1 component of the SCF(GID2) complex. Interacts (via N-terminus) with GID1A, GID1B and GID1B (via N-terminus). Binds to bHLH transcription factors such as MYC2, PIF1, PIF4, PIF6 and SPT. Interacts with the BOI proteins BOI, BRG1, BRG2 and BRG3. Interacts with NFYC9. Interacts with TOPP4. Interacts with FLZ5. Binds to zinc finger proteins MGP/IDD3, IDD4, IDD5, BIB/IDD9 and JKD/IDD10 in the nucleus. Binds to and coactivates GAF1/IDD2 and ENY/IDD1. Binds to PDF2 and ATML1. Phosphorylated. Phosphorylation may increase the interaction with GID2. Post-translationally, gibberellin (GA) induces dephosphorylation of RGA by TOPP4 and subsequent degradation by the proteasomal pathway. In terms of processing, ubiquitinated. Upon GA application it is ubiquitinated by the SCF(GID2) complex, leading to its subsequent degradation. O-fucosylated by SPY. O-fucosylation enhances RGA activity by promoting RGA binding to key transcription factors in brassinosteroid and light signaling pathways. In terms of tissue distribution, ubiquitously expressed. Expressed in roots, rosette leaves, bolting and mature stems, young and mature siliques, flower buds and influorescences.

Its subcellular location is the nucleus. Its function is as follows. Probable transcriptional regulator that acts as a repressor of the gibberellin (GA) signaling pathway. Probably acts by participating in large multiprotein complexes that repress transcription of GA-inducible genes. Positively regulates XERICO expression in seeds. Upon GA application, it is degraded by the proteasome, allowing the GA signaling pathway. Compared to other DELLA proteins, it is the most sensitive to GA application. No effect of the BOI proteins on its stability. Its activity is probably regulated by other phytohormones such as auxin and ethylene, attenuation of auxin transport delaying its GA-induced degradation. Involved in the regulation of seed dormancy and germination, including glucose-induced delay of seed germination. In Arabidopsis thaliana (Mouse-ear cress), this protein is DELLA protein RGA.